Here is a 297-residue protein sequence, read N- to C-terminus: Probable endonuclease 4 (297 aa).

Residues His69, His110, Glu145, Asp179, His182, His214, Asp227, His229, and Glu259 each contribute to the Zn(2+) site.

The protein belongs to the AP endonuclease 2 family. Requires Zn(2+) as cofactor.

It catalyses the reaction Endonucleolytic cleavage to 5'-phosphooligonucleotide end-products.. Endonuclease IV plays a role in DNA repair. It cleaves phosphodiester bonds at apurinic or apyrimidinic (AP) sites, generating a 3'-hydroxyl group and a 5'-terminal sugar phosphate. This chain is Probable endonuclease 4, found in Oceanobacillus iheyensis (strain DSM 14371 / CIP 107618 / JCM 11309 / KCTC 3954 / HTE831).